The primary structure comprises 239 residues: Pyridoxine 5'-phosphate synthase (239 aa).

Residue Asn-7 participates in 3-amino-2-oxopropyl phosphate binding. Residue 9–10 (DH) coordinates 1-deoxy-D-xylulose 5-phosphate. Arg-18 provides a ligand contact to 3-amino-2-oxopropyl phosphate. The Proton acceptor role is filled by His-43. 1-deoxy-D-xylulose 5-phosphate contacts are provided by Arg-45 and His-50. The active-site Proton acceptor is the Glu-70. Residue Thr-100 participates in 1-deoxy-D-xylulose 5-phosphate binding. His-191 acts as the Proton donor in catalysis. Residues Gly-192 and 213–214 (GH) contribute to the 3-amino-2-oxopropyl phosphate site.

It belongs to the PNP synthase family. In terms of assembly, homooctamer; tetramer of dimers.

The protein resides in the cytoplasm. The catalysed reaction is 3-amino-2-oxopropyl phosphate + 1-deoxy-D-xylulose 5-phosphate = pyridoxine 5'-phosphate + phosphate + 2 H2O + H(+). It participates in cofactor biosynthesis; pyridoxine 5'-phosphate biosynthesis; pyridoxine 5'-phosphate from D-erythrose 4-phosphate: step 5/5. Catalyzes the complicated ring closure reaction between the two acyclic compounds 1-deoxy-D-xylulose-5-phosphate (DXP) and 3-amino-2-oxopropyl phosphate (1-amino-acetone-3-phosphate or AAP) to form pyridoxine 5'-phosphate (PNP) and inorganic phosphate. The sequence is that of Pyridoxine 5'-phosphate synthase from Desulforapulum autotrophicum (strain ATCC 43914 / DSM 3382 / VKM B-1955 / HRM2) (Desulfobacterium autotrophicum).